A 247-amino-acid chain; its full sequence is Probable transcriptional regulatory protein lpg1286 (247 aa).

It belongs to the TACO1 family.

The protein resides in the cytoplasm. The protein is Probable transcriptional regulatory protein lpg1286 of Legionella pneumophila subsp. pneumophila (strain Philadelphia 1 / ATCC 33152 / DSM 7513).